Consider the following 131-residue polypeptide: Small ribosomal subunit protein bS6 (131 aa).

The tract at residues 96-131 (VTEASPMAKAKDERDSRRGPAGDRSYDEANAEEIAE) is disordered. Basic and acidic residues predominate over residues 104–122 (KAKDERDSRRGPAGDRSYD).

It belongs to the bacterial ribosomal protein bS6 family.

Functionally, binds together with bS18 to 16S ribosomal RNA. The protein is Small ribosomal subunit protein bS6 of Shewanella sp. (strain MR-4).